The sequence spans 81 residues: Photosystem I iron-sulfur center (81 aa).

4Fe-4S ferredoxin-type domains follow at residues 2 to 31 and 39 to 68; these read SHAV…MVPW and IASS…IRVY. 8 residues coordinate [4Fe-4S] cluster: C11, C14, C17, C21, C48, C51, C54, and C58.

In terms of assembly, the cyanobacterial PSI reaction center is composed of one copy each of PsaA,B,C,D,E,F,I,J,K,L,M and X, and forms trimeric complexes. [4Fe-4S] cluster serves as cofactor.

The protein localises to the cellular thylakoid membrane. It catalyses the reaction reduced [plastocyanin] + hnu + oxidized [2Fe-2S]-[ferredoxin] = oxidized [plastocyanin] + reduced [2Fe-2S]-[ferredoxin]. In terms of biological role, apoprotein for the two 4Fe-4S centers FA and FB of photosystem I (PSI); essential for photochemical activity. FB is the terminal electron acceptor of PSI, donating electrons to ferredoxin. The C-terminus interacts with PsaA/B/D and helps assemble the protein into the PSI complex. Required for binding of PsaD and PsaE to PSI. PSI is a plastocyanin/cytochrome c6-ferredoxin oxidoreductase, converting photonic excitation into a charge separation, which transfers an electron from the donor P700 chlorophyll pair to the spectroscopically characterized acceptors A0, A1, FX, FA and FB in turn. This Prochlorococcus marinus (strain MIT 9211) protein is Photosystem I iron-sulfur center.